The sequence spans 442 residues: UDP-N-acetylmuramate--L-alanine ligase (442 aa).

109–115 (GAHGKTS) lines the ATP pocket.

Belongs to the MurCDEF family.

The protein localises to the cytoplasm. The catalysed reaction is UDP-N-acetyl-alpha-D-muramate + L-alanine + ATP = UDP-N-acetyl-alpha-D-muramoyl-L-alanine + ADP + phosphate + H(+). Its pathway is cell wall biogenesis; peptidoglycan biosynthesis. Cell wall formation. This chain is UDP-N-acetylmuramate--L-alanine ligase, found in Streptococcus pyogenes serotype M49 (strain NZ131).